The primary structure comprises 255 residues: Borealin-2 (255 aa).

Disordered stretches follow at residues 1–24 (MAPR…HSFE) and 107–156 (IQKP…STGS). Residues 124-135 (AGQQRSSSQSKT) show a composition bias toward polar residues.

Belongs to the borealin family. As to quaternary structure, component of the CPC complex.

The protein localises to the nucleus. Its subcellular location is the chromosome. The protein resides in the centromere. Component of the chromosomal passenger complex (CPC), a complex that acts as a key regulator of mitosis. The CPC complex has essential functions at the centromere in ensuring correct chromosome alignment and segregation and is required for chromatin-induced microtubule stabilization and spindle assembly. The chain is Borealin-2 (cdca9) from Danio rerio (Zebrafish).